A 107-amino-acid chain; its full sequence is CRISPR-associated endoribonuclease Cas2 (107 aa).

Aspartate 6 is a binding site for Mg(2+).

It belongs to the CRISPR-associated endoribonuclease Cas2 protein family. As to quaternary structure, homodimer, forms a heterotetramer with a Cas1 homodimer. Mg(2+) is required as a cofactor.

CRISPR (clustered regularly interspaced short palindromic repeat), is an adaptive immune system that provides protection against mobile genetic elements (viruses, transposable elements and conjugative plasmids). CRISPR clusters contain sequences complementary to antecedent mobile elements and target invading nucleic acids. CRISPR clusters are transcribed and processed into CRISPR RNA (crRNA). Functions as a ssRNA-specific endoribonuclease. Involved in the integration of spacer DNA into the CRISPR cassette. The protein is CRISPR-associated endoribonuclease Cas2 of Streptococcus mutans serotype c (strain NN2025).